We begin with the raw amino-acid sequence, 371 residues long: Transcription factor bHLH77 (371 aa).

Disordered regions lie at residues 1–25 (MNMD…FGNG), 65–206 (SGGI…SLAE), and 352–371 (QSNN…KLEP). The span at 85-96 (SQPTTQESNKSS) shows a compositional bias: polar residues. The span at 128–142 (SPASSSLTASNSKVS) shows a compositional bias: low complexity. Positions 165–190 (GVEKCDSKGDNKDDAKPPEAPKDYIH) are enriched in basic and acidic residues. The bHLH domain maps to 197–247 (QATDSHSLAERARREKISERMTLLQDLVPGCNRITGKAVMLDEIINYVQSL).

In terms of assembly, homodimer. Interacts with IBH1. Expressed constitutively in roots, leaves, stems, and flowers.

The protein localises to the nucleus. This chain is Transcription factor bHLH77 (BHLH77), found in Arabidopsis thaliana (Mouse-ear cress).